Here is a 265-residue protein sequence, read N- to C-terminus: F-box only protein 6 (265 aa).

One can recognise an F-box domain in the interval 3–50 (LVSINQLPENILLEVFMHVPARQLLRNCRPVCCLWRDLIDLVSLWKRK). Residues 71–252 (FYFLCSLRRN…VTNSSVVISH (182 aa)) enclose the FBA domain. Ser251 is subject to Phosphoserine.

As to quaternary structure, part of a SCF (SKP1-cullin-F-box) protein ligase complex. Interacts with VCP, CHEK1 and CUL1.

Its subcellular location is the cytoplasm. It functions in the pathway protein modification; protein ubiquitination. Substrate-recognition component of some SCF (SKP1-CUL1-F-box protein)-type E3 ubiquitin ligase complexes. Involved in endoplasmic reticulum-associated degradation pathway (ERAD) for misfolded lumenal proteins by recognizing and binding sugar chains on unfolded glycoproteins that are retrotranslocated into the cytosol and promoting their ubiquitination and subsequent degradation. Able to recognize and bind denatured glycoproteins, which are modified with not only high-mannose but also complex-type oligosaccharides. Also recognizes sulfated glycans. Also involved in DNA damage response by specifically recognizing activated CHEK1 (phosphorylated on 'Ser-345'), promoting its ubiquitination and degradation. Ubiquitination of CHEK1 is required to ensure that activated CHEK1 does not accumulate as cells progress through S phase, or when replication forks encounter transient impediments during normal DNA replication. This Bos taurus (Bovine) protein is F-box only protein 6 (FBXO6).